Here is a 175-residue protein sequence, read N- to C-terminus: Protein UPS1, mitochondrial (175 aa).

The required for mitochondrial targeting stretch occupies residues 1 to 80 (MVLLHKSTHI…RGITETWIIE (80 aa)). One can recognise a PRELI/MSF1 domain in the interval 2–172 (VLLHKSTHIF…VIQKLEEARN (171 aa)). Tyr26, Lys58, Lys148, and Asn152 together coordinate a 1,2-diacyl-sn-glycero-3-phosphate.

Belongs to the slowmo family. Interacts with MDM35. Found associated with a 170 kDa complex.

The protein resides in the mitochondrion inner membrane. Its subcellular location is the mitochondrion intermembrane space. Its function is as follows. Required for maintenance of normal mitochondrial morphology. Required for PCP1-dependent processing of MGM1. The UPS1:MDM35 complex mediates the transfer of phosphatidic acid (PA) between liposomes and probably functions as a PA transporter across the mitochondrion intermembrane space. Phosphatidic acid release requires dissociation of the UPS1:MDM35 complex. Phosphatidic acid import is required for cardiolipin (CL) synthesis in the mitochondrial inner membrane. With UPS2, controls the level of cardiolipin in mitochondria. Cardiolipin is a unique phospholipid with four fatty acid chains and is present mainly in the mitochondrial inner membrane where it stabilizes the electron transport chain supercomplex between complexes III and IV through direct interaction of their subunits. The polypeptide is Protein UPS1, mitochondrial (UPS1) (Saccharomyces cerevisiae (strain ATCC 204508 / S288c) (Baker's yeast)).